Here is a 432-residue protein sequence, read N- to C-terminus: Asparagine--tRNA ligase (432 aa).

It belongs to the class-II aminoacyl-tRNA synthetase family. As to quaternary structure, homodimer.

The protein resides in the cytoplasm. The catalysed reaction is tRNA(Asn) + L-asparagine + ATP = L-asparaginyl-tRNA(Asn) + AMP + diphosphate + H(+). The chain is Asparagine--tRNA ligase from Limosilactobacillus reuteri (strain DSM 20016) (Lactobacillus reuteri).